We begin with the raw amino-acid sequence, 95 residues long: Cell division protein FtsB (95 aa).

Over 1-3 (MRW) the chain is Cytoplasmic. A helical membrane pass occupies residues 4 to 21 (VLAGLTALLLWLQGLLWF). The Periplasmic portion of the chain corresponds to 22–95 (GEGGLNDVRG…QIIEREDDAR (74 aa)). Residues 26-76 (LNDVRGLSRSVEAQREEVDRLRQRNQALEAEVNDLKTGLEALEERARSELG) adopt a coiled-coil conformation.

This sequence belongs to the FtsB family. Part of a complex composed of FtsB, FtsL and FtsQ.

Its subcellular location is the cell inner membrane. Functionally, essential cell division protein. May link together the upstream cell division proteins, which are predominantly cytoplasmic, with the downstream cell division proteins, which are predominantly periplasmic. The protein is Cell division protein FtsB of Alkalilimnicola ehrlichii (strain ATCC BAA-1101 / DSM 17681 / MLHE-1).